The primary structure comprises 428 residues: tRNA modification GTPase MnmE (428 aa).

3 residues coordinate (6S)-5-formyl-5,6,7,8-tetrahydrofolate: Arg-20, Glu-77, and Lys-117. One can recognise a TrmE-type G domain in the interval 213-351 (GFEVAIIGPP…LVQRISDVLK (139 aa)). Asn-223 lines the K(+) pocket. GTP is bound by residues 223-228 (NAGKST), 242-248 (SEVAGTT), and 267-270 (DTAG). Ser-227 lines the Mg(2+) pocket. K(+)-binding residues include Ser-242, Val-244, and Thr-247. Thr-248 is a binding site for Mg(2+). Residue Lys-428 coordinates (6S)-5-formyl-5,6,7,8-tetrahydrofolate.

Belongs to the TRAFAC class TrmE-Era-EngA-EngB-Septin-like GTPase superfamily. TrmE GTPase family. In terms of assembly, homodimer. Heterotetramer of two MnmE and two MnmG subunits. Requires K(+) as cofactor.

The protein resides in the cytoplasm. In terms of biological role, exhibits a very high intrinsic GTPase hydrolysis rate. Involved in the addition of a carboxymethylaminomethyl (cmnm) group at the wobble position (U34) of certain tRNAs, forming tRNA-cmnm(5)s(2)U34. In Ruegeria pomeroyi (strain ATCC 700808 / DSM 15171 / DSS-3) (Silicibacter pomeroyi), this protein is tRNA modification GTPase MnmE.